The chain runs to 563 residues: Alpha-keto-acid decarboxylase (563 aa).

Glutamate 59 lines the thiamine diphosphate pocket. A disordered region spans residues 348 to 367; it reads SPPVASPPAEPLPPPPPREQ. Over residues 351-366 the composition is skewed to pro residues; sequence VASPPAEPLPPPPPRE. The segment at 394-476 is thiamine pyrophosphate binding; that stretch reads TSFYGMADHR…VVVNNDGYTV (83 aa). Mg(2+) is bound by residues aspartate 444, asparagine 471, and glycine 473.

Belongs to the TPP enzyme family. The cofactor is a metal cation. Thiamine diphosphate is required as a cofactor.

Its function is as follows. Decarboxylates branched-chain and aromatic alpha-keto acids to aldehydes. The chain is Alpha-keto-acid decarboxylase (kdc) from Mycobacterium avium (strain 104).